The following is a 385-amino-acid chain: UPF0496 protein At3g28290 (385 aa).

Positions 138-214 (KDKENDVGKK…IEMEISSRKK (77 aa)) form a coiled coil. Transmembrane regions (helical) follow at residues 217–237 (IISN…SMVL) and 242–262 (VGAG…IGWV). The stretch at 267 to 294 (ILENKIQAREKQEEALKKAHRIANEMDK) forms a coiled coil.

The protein belongs to the UPF0496 family. Widely expressed.

It is found in the membrane. In Arabidopsis thaliana (Mouse-ear cress), this protein is UPF0496 protein At3g28290.